The chain runs to 340 residues: Phosphoribosylformylglycinamidine cyclo-ligase (340 aa).

This sequence belongs to the AIR synthase family.

Its subcellular location is the cytoplasm. It catalyses the reaction 2-formamido-N(1)-(5-O-phospho-beta-D-ribosyl)acetamidine + ATP = 5-amino-1-(5-phospho-beta-D-ribosyl)imidazole + ADP + phosphate + H(+). Its pathway is purine metabolism; IMP biosynthesis via de novo pathway; 5-amino-1-(5-phospho-D-ribosyl)imidazole from N(2)-formyl-N(1)-(5-phospho-D-ribosyl)glycinamide: step 2/2. This chain is Phosphoribosylformylglycinamidine cyclo-ligase, found in Streptococcus pyogenes serotype M28 (strain MGAS6180).